Reading from the N-terminus, the 283-residue chain is MNDDLPILPPGFGPGSHGEEERPDCPSMPRAMRRFERPALPEPGQLSGHPIALALLERLQEALGAYRIGEQSRVIGLDRQPKADLKLLQQILGEGEVAIQVGGQRPARIQETVLAGVWWVQLQIGRGEVVGQWLEVADVPALVRRRAFAETRWPQLGELPDGLLNAGPVLVELLDAAKRHAERALATPHAVNLSLLPFSPEDRRFLAERLGEGSVTLLSRGYGNCRIASTATPGIWCVQYFNSSDRLILDTLEVTGIPQVACAAQEDIDDSAERLREIREALE.

The disordered stretch occupies residues 1–29 (MNDDLPILPPGFGPGSHGEEERPDCPSMP).

This sequence belongs to the HupH/HyaF family.

The protein is Hydrogenase expression/formation protein HoxQ (hoxQ) of Azotobacter vinelandii.